Consider the following 423-residue polypeptide: Serine hydroxymethyltransferase (423 aa).

Residues leucine 121 and 125–127 contribute to the (6S)-5,6,7,8-tetrahydrofolate site; that span reads GHL. An N6-(pyridoxal phosphate)lysine modification is found at lysine 230. 355 to 357 serves as a coordination point for (6S)-5,6,7,8-tetrahydrofolate; it reads SPF.

Belongs to the SHMT family. Homodimer. Pyridoxal 5'-phosphate is required as a cofactor.

It localises to the cytoplasm. The catalysed reaction is (6R)-5,10-methylene-5,6,7,8-tetrahydrofolate + glycine + H2O = (6S)-5,6,7,8-tetrahydrofolate + L-serine. It functions in the pathway one-carbon metabolism; tetrahydrofolate interconversion. The protein operates within amino-acid biosynthesis; glycine biosynthesis; glycine from L-serine: step 1/1. In terms of biological role, catalyzes the reversible interconversion of serine and glycine with tetrahydrofolate (THF) serving as the one-carbon carrier. This reaction serves as the major source of one-carbon groups required for the biosynthesis of purines, thymidylate, methionine, and other important biomolecules. Also exhibits THF-independent aldolase activity toward beta-hydroxyamino acids, producing glycine and aldehydes, via a retro-aldol mechanism. This is Serine hydroxymethyltransferase from Hydrogenovibrio crunogenus (strain DSM 25203 / XCL-2) (Thiomicrospira crunogena).